The primary structure comprises 301 residues: Acetyl-coenzyme A carboxylase carboxyl transferase subunit beta (301 aa).

Positions 25-294 (LWIKDPSTGE…NSDAPAPQKP (270 aa)) constitute a CoA carboxyltransferase N-terminal domain.

Belongs to the AccD/PCCB family. As to quaternary structure, acetyl-CoA carboxylase is a heterohexamer composed of biotin carboxyl carrier protein (AccB), biotin carboxylase (AccC) and two subunits each of ACCase subunit alpha (AccA) and ACCase subunit beta (AccD).

It is found in the cytoplasm. It carries out the reaction N(6)-carboxybiotinyl-L-lysyl-[protein] + acetyl-CoA = N(6)-biotinyl-L-lysyl-[protein] + malonyl-CoA. Its pathway is lipid metabolism; malonyl-CoA biosynthesis; malonyl-CoA from acetyl-CoA: step 1/1. Functionally, component of the acetyl coenzyme A carboxylase (ACC) complex. Biotin carboxylase (BC) catalyzes the carboxylation of biotin on its carrier protein (BCCP) and then the CO(2) group is transferred by the transcarboxylase to acetyl-CoA to form malonyl-CoA. In Brucella abortus (strain 2308), this protein is Acetyl-coenzyme A carboxylase carboxyl transferase subunit beta.